The following is a 389-amino-acid chain: POU domain, class 5, transcription factor 3 (389 aa).

Composition is skewed to low complexity over residues 1–18 and 145–165; these read MFSPDGGLPAAPFGLLPD and LANLGSSGSSSGAASEGGHSS. Disordered regions lie at residues 1-88 and 145-177; these read MFSP…APPA and LANLGSSGSSSGAASEGGHSSDSGDEDAPTSEE. The segment covering 167 to 177 has biased composition (acidic residues); the sequence is SGDEDAPTSEE. Positions 170 to 244 constitute a POU-specific domain; sequence EDAPTSEELE…LLQRWLNEAE (75 aa). The homeobox DNA-binding region spans 264–323; it reads KRKRRTSIETNVKGTLESFFRKCVKPSPQEISQIAEDLNLDKDVVRVWFCNRRQKGKRLL.

This sequence belongs to the POU transcription factor family.

It is found in the nucleus. Required for the maintenance of pluripotency and self-renewal of embryonic stem cells. Transcriptional activator that binds the DNA consensus sequence 5'-ATGCAAAT-3'. This Gallus gallus (Chicken) protein is POU domain, class 5, transcription factor 3 (POU5F3).